The following is a 197-amino-acid chain: MKTKNRPPRRRTPMQDAEATPGEQTPDRSQSGSGASEVTKGLRSRTARASGTRAEVSRRRQGSSSRRENSVQRRLESNERERQRMHKLNNAFQALREVIPHVRADKKLSKIETLTLAKNYIKSLTATILTMSSSRLPGLEAPGPAPGPKLYQHYHHQQQQQQQQQQVAGAVLGVTEDQPQGHLQRYSTQIHSFREGS.

A compositionally biased stretch (basic residues) spans 1-12 (MKTKNRPPRRRT). Disordered stretches follow at residues 1 to 82 (MKTK…ERER) and 175 to 197 (TEDQPQGHLQRYSTQIHSFREGS). Residues Thr-12 and Thr-25 each carry the phosphothreonine modification. Positions 27–36 (DRSQSGSGAS) are enriched in polar residues. Positions 65–82 (SRRENSVQRRLESNERER) are enriched in basic and acidic residues. The region spanning 72–124 (QRRLESNERERQRMHKLNNAFQALREVIPHVRADKKLSKIETLTLAKNYIKSL) is the bHLH domain.

As to quaternary structure, forms homodimers or heterodimers with TCF3 gene products E12 and E47. These dimers bind to the E-box site, however, heterodimer with MYOD1 does not bind target DNA. In terms of tissue distribution, expressed in liver, spleen and olfactory epithelium. Weaker expression is seen in skeletal muscle, cardiac muscle, eye and brain tissue.

Its subcellular location is the nucleus. Functionally, plays a role in controlling the transcriptional activity of MyoD, ensuring that expanding myoblast populations remain undifferentiated. Repression may occur through muscle-specific E-box occupancy by homodimers. May also negatively regulate bHLH-mediated transcription through an N-terminal repressor domain. Serves as a key regulator of acinar cell function, stability, and identity. Also required for normal organelle localization in exocrine cells and for mitochondrial calcium ion transport. May function as a unique regulator of gene expression in several different embryonic and postnatal cell lineages. Binds to the E-box consensus sequence 5'-CANNTG-3'. In Rattus norvegicus (Rat), this protein is Class A basic helix-loop-helix protein 15 (Bhlha15).